The chain runs to 187 residues: Potassium-transporting ATPase KdpC subunit (187 aa).

Residues 11–31 (LILLMTVVTGALYPLAVTGIA) form a helical membrane-spanning segment.

It belongs to the KdpC family. As to quaternary structure, the system is composed of three essential subunits: KdpA, KdpB and KdpC.

It is found in the cell inner membrane. In terms of biological role, part of the high-affinity ATP-driven potassium transport (or Kdp) system, which catalyzes the hydrolysis of ATP coupled with the electrogenic transport of potassium into the cytoplasm. This subunit acts as a catalytic chaperone that increases the ATP-binding affinity of the ATP-hydrolyzing subunit KdpB by the formation of a transient KdpB/KdpC/ATP ternary complex. In Pseudomonas entomophila (strain L48), this protein is Potassium-transporting ATPase KdpC subunit.